We begin with the raw amino-acid sequence, 229 residues long: Sugar fermentation stimulation protein homolog (229 aa).

The protein belongs to the SfsA family.

The polypeptide is Sugar fermentation stimulation protein homolog (Caldanaerobacter subterraneus subsp. tengcongensis (strain DSM 15242 / JCM 11007 / NBRC 100824 / MB4) (Thermoanaerobacter tengcongensis)).